The chain runs to 248 residues: Triosephosphate isomerase (248 aa).

Asparagine 9–lysine 11 provides a ligand contact to substrate. Histidine 94 acts as the Electrophile in catalysis. The Proton acceptor role is filled by glutamate 166. Substrate is bound by residues glycine 172, serine 212, and glycine 233–glycine 234.

This sequence belongs to the triosephosphate isomerase family. In terms of assembly, homodimer.

It localises to the cytoplasm. It carries out the reaction D-glyceraldehyde 3-phosphate = dihydroxyacetone phosphate. Its pathway is carbohydrate biosynthesis; gluconeogenesis. It functions in the pathway carbohydrate degradation; glycolysis; D-glyceraldehyde 3-phosphate from glycerone phosphate: step 1/1. Involved in the gluconeogenesis. Catalyzes stereospecifically the conversion of dihydroxyacetone phosphate (DHAP) to D-glyceraldehyde-3-phosphate (G3P). The chain is Triosephosphate isomerase from Clostridium botulinum (strain Langeland / NCTC 10281 / Type F).